A 618-amino-acid polypeptide reads, in one-letter code: MLLQKIESPKDLKKLSIEELKKLSSEIREIIINTVENNGGHLASNLGTVELTLALHYVFDAPKDKIIWDVGHQAYTHKLITGRAKDFHTLRQYGGISGYIAPWESEYDHFAVGHAGTSLSAALGFAKARDLKGEKYKVVAVIGDGALTSGMALEALNQIGYLNTDLIVILNDNEHSISPNVGAMALYLAKLRKHPLYRFFKQTTQNLLKNSSIGKGLLAFDLKLERSLKSLLLENPMFEYLGFKYFGPFDGHDIPLLISVFKGIKDNLSCPVLIHVTTKKGIGHKDAEATPSKFHSIGSKSEKEKKVPTYTEVFGKALVELGGMYPEVVAITAAMPEGTGLSYFAQRFPERFFDVGIAEQHAVTFAAGLAKNGLKPVVAIYSTFLQRSFDQIIHDVCLQKLPITFVLDRAGIVSDDGPTHQGIFDLSYLRLIPNMVIAAPKDESELRDLLYTAINYPGPFAIRYPKGKGVGVELKNRFEKIEIGKSEIVKQGRDVLILAIGSMVYPAVEAGNILRSEGIYPTVVNVRFLKPLDILTLEELILSHNTIITVEENVITGGLFGAIAELINILKINKKVIPIGLPDKFIEQGNVQLLRDIYGLNEYKIAEKIISVLEDIKV.

Thiamine diphosphate is bound by residues histidine 72 and 113-115 (GHA). Aspartate 144 contacts Mg(2+). Residues 145-146 (GA), asparagine 173, histidine 284, and glutamate 359 each bind thiamine diphosphate. Asparagine 173 lines the Mg(2+) pocket.

This sequence belongs to the transketolase family. DXPS subfamily. Homodimer. It depends on Mg(2+) as a cofactor. The cofactor is thiamine diphosphate.

The enzyme catalyses D-glyceraldehyde 3-phosphate + pyruvate + H(+) = 1-deoxy-D-xylulose 5-phosphate + CO2. Its pathway is metabolic intermediate biosynthesis; 1-deoxy-D-xylulose 5-phosphate biosynthesis; 1-deoxy-D-xylulose 5-phosphate from D-glyceraldehyde 3-phosphate and pyruvate: step 1/1. Its function is as follows. Catalyzes the acyloin condensation reaction between C atoms 2 and 3 of pyruvate and glyceraldehyde 3-phosphate to yield 1-deoxy-D-xylulose-5-phosphate (DXP). The chain is 1-deoxy-D-xylulose-5-phosphate synthase from Dictyoglomus turgidum (strain DSM 6724 / Z-1310).